The primary structure comprises 1286 residues: DNA-directed RNA polymerase 147 kDa polypeptide (1286 aa).

It belongs to the poxviridae DNA-directed RNA polymerase 147 kDa subunit family. The DNA-dependent RNA polymerase used for intermediate and late genes expression consists of eight subunits Rpo30/OPG66, Rpo7/OPG90, Rpo22/OPG103, Rpo147/OPG105, Rpo18/OPG119, Rpo19/OPG131, Rpo132/OPG151 and Rpo35/OPG156. The same holoenzyme, with the addition of the transcription-specificity factor OPG109, is used for early gene expression.

The protein resides in the virion. The catalysed reaction is RNA(n) + a ribonucleoside 5'-triphosphate = RNA(n+1) + diphosphate. In terms of biological role, part of the DNA-dependent RNA polymerase which catalyzes the transcription of viral DNA into RNA using the four ribonucleoside triphosphates as substrates. Responsible for the transcription of early, intermediate and late genes. DNA-dependent RNA polymerase associates with the early transcription factor (ETF), itself composed of OPG118 and OPG133, thereby allowing the early genes transcription. Late transcription, and probably also intermediate transcription, require newly synthesized RNA polymerase. This chain is DNA-directed RNA polymerase 147 kDa polypeptide (OPG105), found in Vaccinia virus (strain Ankara) (VACV).